The primary structure comprises 532 residues: Flavin-containing monooxygenase 3 (532 aa).

Residues 9–13 (GAGVS), Glu32, 40–41 (LW), and 61–62 (NS) each bind FAD. Residues 60 to 61 (SN) and 195 to 198 (SGCD) contribute to the NADP(+) site. The residue at position 401 (Ser401) is a Phosphoserine. The helical transmembrane segment at 510–530 (FFFHWLKLFAIPILLIAVFLV) threads the bilayer.

It belongs to the FMO family. Requires FAD as cofactor. In terms of tissue distribution, liver.

The protein resides in the microsome membrane. Its subcellular location is the endoplasmic reticulum membrane. The enzyme catalyses trimethylamine + NADPH + O2 = trimethylamine N-oxide + NADP(+) + H2O. It carries out the reaction N,N-dimethylaniline + NADPH + O2 + H(+) = N,N-dimethylaniline N-oxide + NADP(+) + H2O. It catalyses the reaction hypotaurine + NADPH + O2 + H(+) = taurine + NADP(+) + H2O. The catalysed reaction is (S)-nicotine + NADPH + O2 = trans-(S)-nicotine N(1')-oxide + NADP(+) + H2O. The enzyme catalyses albendazole + NADPH + O2 + H(+) = albendazole S-oxide + NADP(+) + H2O. Functionally, essential hepatic enzyme that catalyzes the oxygenation of a wide variety of nitrogen- and sulfur-containing compounds including drugs as well as dietary compounds. Plays an important role in the metabolism of trimethylamine (TMA), via the production of trimethylamine N-oxide (TMAO) metabolite. TMA is generated by the action of gut microbiota using dietary precursors such as choline, choline containing compounds, betaine or L-carnitine. By regulating TMAO concentration, FMO3 directly impacts both platelet responsiveness and rate of thrombus formation. The polypeptide is Flavin-containing monooxygenase 3 (FMO3) (Homo sapiens (Human)).